The following is a 208-amino-acid chain: MKGLFVTIEGPEGSGKTTLIQGLLPYFEQKEQKVMATREPGGIAISEDIRTILHKQEYTMMEARTEALLYAAARRQHLVEKVMPALNEDYLVLCDRFIDSSLAYQGYARGLGMDKVFEINRFATEDCMPSLTIYLDIEPEVGLARIAKDAGREVNRLDMEDISFHKRVREGYLQVVERFSDRIVLVNADQPMEKLIEEVIQVIEDKLL.

10–17 is an ATP binding site; the sequence is GPEGSGKT.

It belongs to the thymidylate kinase family.

It catalyses the reaction dTMP + ATP = dTDP + ADP. Its function is as follows. Phosphorylation of dTMP to form dTDP in both de novo and salvage pathways of dTTP synthesis. The protein is Thymidylate kinase of Bacillus cereus (strain AH187).